A 265-amino-acid polypeptide reads, in one-letter code: Small ribosomal subunit protein uS2 (265 aa).

It belongs to the universal ribosomal protein uS2 family.

In Microcystis aeruginosa (strain NIES-843 / IAM M-2473), this protein is Small ribosomal subunit protein uS2.